The primary structure comprises 264 residues: Thymidylate synthase (264 aa).

Arg-21 contacts dUMP. Residue His-51 coordinates (6R)-5,10-methylene-5,6,7,8-tetrahydrofolate. Residue 126 to 127 (RR) coordinates dUMP. Catalysis depends on Cys-146, which acts as the Nucleophile. DUMP is bound by residues 166 to 169 (RSAD), Asn-177, and 207 to 209 (HIY). (6R)-5,10-methylene-5,6,7,8-tetrahydrofolate is bound at residue Asp-169. Ser-263 contacts (6R)-5,10-methylene-5,6,7,8-tetrahydrofolate.

This sequence belongs to the thymidylate synthase family. Bacterial-type ThyA subfamily. Homodimer.

It is found in the cytoplasm. The enzyme catalyses dUMP + (6R)-5,10-methylene-5,6,7,8-tetrahydrofolate = 7,8-dihydrofolate + dTMP. The protein operates within pyrimidine metabolism; dTTP biosynthesis. Catalyzes the reductive methylation of 2'-deoxyuridine-5'-monophosphate (dUMP) to 2'-deoxythymidine-5'-monophosphate (dTMP) while utilizing 5,10-methylenetetrahydrofolate (mTHF) as the methyl donor and reductant in the reaction, yielding dihydrofolate (DHF) as a by-product. This enzymatic reaction provides an intracellular de novo source of dTMP, an essential precursor for DNA biosynthesis. The polypeptide is Thymidylate synthase (Exiguobacterium sp. (strain ATCC BAA-1283 / AT1b)).